The following is a 221-amino-acid chain: Probable septum site-determining protein MinC (221 aa).

It belongs to the MinC family. Interacts with MinD and FtsZ.

In terms of biological role, cell division inhibitor that blocks the formation of polar Z ring septums. Rapidly oscillates between the poles of the cell to destabilize FtsZ filaments that have formed before they mature into polar Z rings. Prevents FtsZ polymerization. This is Probable septum site-determining protein MinC from Shewanella halifaxensis (strain HAW-EB4).